Here is a 553-residue protein sequence, read N- to C-terminus: MKYIFVTGGVVSSLGKGVASASLGALLRARGYKVTAVKIDPYINIDAGTMRPYEHGEVFVTASGAETDLDIGNYERFLDLDIPPGSNITTGQVYLEVIRKERAGDYLSQTVQVIPHVTDEIKRRIRTAGENAGAEIVLIEVGGTVGDIESLPFLEAIRQFKFDEGDENVLYIHLTLVPYLGTSNEFKTKPTQHSVAELRSVGISPDIVMVRSKEKLPPEITRKIALFTSVRENRVFSSYDVGHVYELPLALEEQGLGKAVEDLLGLERTHPNLGVWQNAVRTLKHPNHEVTIAIAGKYTEMPDAYLSLLESLTHAGIANDARVNIKWVNAEELAEGDLETQLGDADGILVPGGFGIRGIEGKIKAAEYARTHNVPYLGICLGMQIAVIEYARHVAGLTGANSAEFDPYAPHKVIDLMPEQLEVEGLGGTMRLGDWPMELRAGTKIAELYGVPQGGTVRERHRHRYEVNPAYVGQLQDAGLVISGVTPGVQGRGAGLVESIEIPGHPFFVALQAHPEFKSRPMRPSPPFAGFVAAALQSGPSSAASGQTVAAEA.

An amidoligase domain region spans residues 1 to 266 (MKYIFVTGGV…GKAVEDLLGL (266 aa)). S12 contacts CTP. Residue S12 participates in UTP binding. 13–18 (SLGKGV) provides a ligand contact to ATP. Y53 lines the L-glutamine pocket. D70 provides a ligand contact to ATP. D70 and E140 together coordinate Mg(2+). CTP-binding positions include 147-149 (DIE), 187-192 (KTKPTQ), and K223. UTP is bound by residues 187–192 (KTKPTQ) and K223. One can recognise a Glutamine amidotransferase type-1 domain in the interval 291 to 541 (TIAIAGKYTE…VAAALQSGPS (251 aa)). L-glutamine is bound at residue G353. C380 serves as the catalytic Nucleophile; for glutamine hydrolysis. Residues 381–384 (LGMQ), E404, and R464 each bind L-glutamine. Active-site residues include H514 and E516.

It belongs to the CTP synthase family. As to quaternary structure, homotetramer.

It carries out the reaction UTP + L-glutamine + ATP + H2O = CTP + L-glutamate + ADP + phosphate + 2 H(+). It catalyses the reaction L-glutamine + H2O = L-glutamate + NH4(+). The enzyme catalyses UTP + NH4(+) + ATP = CTP + ADP + phosphate + 2 H(+). The protein operates within pyrimidine metabolism; CTP biosynthesis via de novo pathway; CTP from UDP: step 2/2. With respect to regulation, allosterically activated by GTP, when glutamine is the substrate; GTP has no effect on the reaction when ammonia is the substrate. The allosteric effector GTP functions by stabilizing the protein conformation that binds the tetrahedral intermediate(s) formed during glutamine hydrolysis. Inhibited by the product CTP, via allosteric rather than competitive inhibition. Its function is as follows. Catalyzes the ATP-dependent amination of UTP to CTP with either L-glutamine or ammonia as the source of nitrogen. Regulates intracellular CTP levels through interactions with the four ribonucleotide triphosphates. In Deinococcus geothermalis (strain DSM 11300 / CIP 105573 / AG-3a), this protein is CTP synthase.